The sequence spans 339 residues: Cathepsin B (339 aa).

The signal sequence occupies residues 1–17; the sequence is MWWSLILLSCLLALTSA. A propeptide spans 18 to 79 (activation peptide); sequence HDKPSFHPLS…GRVAFGEDID (62 aa). Intrachain disulfides connect Cys93-Cys122, Cys105-Cys150, Cys141-Cys207, Cys142-Cys146, Cys179-Cys211, and Cys187-Cys198. Cys108 is a catalytic residue. Asn192 carries an N-linked (GlcNAc...) asparagine glycan. Residue Lys220 is modified to N6-acetyllysine. Catalysis depends on residues His278 and Asn298. Residues 334-339 constitute a propeptide that is removed on maturation; it reads QYWGRF.

Belongs to the peptidase C1 family. Dimer of a heavy chain and a light chain cross-linked by a disulfide bond. Interacts with SRPX2. Directly interacts with SHKBP1. Expressed in thyroid epithelial cells.

Its subcellular location is the lysosome. The protein localises to the melanosome. The protein resides in the secreted. It localises to the extracellular space. It is found in the apical cell membrane. The enzyme catalyses Hydrolysis of proteins with broad specificity for peptide bonds. Preferentially cleaves -Arg-Arg-|-Xaa bonds in small molecule substrates (thus differing from cathepsin L). In addition to being an endopeptidase, shows peptidyl-dipeptidase activity, liberating C-terminal dipeptides.. Its function is as follows. Thiol protease which is believed to participate in intracellular degradation and turnover of proteins. Cleaves matrix extracellular phosphoglycoprotein MEPE. Involved in the solubilization of cross-linked TG/thyroglobulin in the thyroid follicle lumen. Has also been implicated in tumor invasion and metastasis. This Mus musculus (Mouse) protein is Cathepsin B (Ctsb).